Consider the following 231-residue polypeptide: Class A basic helix-loop-helix protein 9 (231 aa).

Residues Ala-61–Leu-113 form the bHLH domain. The disordered stretch occupies residues Gln-135 to Ser-168. Positions Ala-137–Val-149 are enriched in polar residues.

Heterodimer. Efficient DNA binding requires dimerization with another bHLH protein. Interacts with TCF3, TCF4, and TCF12.

The protein resides in the nucleus. In terms of biological role, transcription factor, which play a role in limb development. Is an essential player in the regulatory network governing transcription of genes implicated in limb morphogenesis. In Mus musculus (Mouse), this protein is Class A basic helix-loop-helix protein 9 (Bhlha9).